We begin with the raw amino-acid sequence, 286 residues long: Myb family transcription factor PHL7 (286 aa).

Residues 12–72 enclose the HTH myb-type domain; the sequence is HASKQRLRWT…HLQKYRLAKY (61 aa). Positions 43–68 form a DNA-binding region, H-T-H motif; that stretch reads PKGVLRVMGVQGLTIYHVKSHLQKYR. The segment at 74–97 is disordered; it reads PDSSSEGKKTDKKESGDMLSGLDG. Residues 78 to 89 show a composition bias toward basic and acidic residues; the sequence is SEGKKTDKKESG. Positions 104–124 form a coiled coil; the sequence is TEALKLQMEVQKRLHEQLEVQ. The LHEQLE signature appears at 117–122; it reads LHEQLE. A disordered region spans residues 152–227; that stretch reads LGEPSAPVTG…TGEERLSKKP (76 aa).

This sequence belongs to the MYB-CC family.

Its subcellular location is the nucleus. This is Myb family transcription factor PHL7 from Arabidopsis thaliana (Mouse-ear cress).